We begin with the raw amino-acid sequence, 852 residues long: Lon protease homolog 2, peroxisomal (852 aa).

Serine 2 carries the N-acetylserine modification. Residues 13-222 form the Lon N-terminal domain; sequence LPLLLTHESV…MTIPLLVRQI (210 aa). 375-382 is an ATP binding site; sequence GPPGVGKT. The Lon proteolytic domain occupies 651–837; it reads LSQPGVAIGL…DEVLNAAFDG (187 aa). Catalysis depends on residues serine 743 and lysine 786. Positions 850–852 match the Microbody targeting signal motif; it reads SKL.

It belongs to the peptidase S16 family. Interacts with PEX5. Interacts with TYSND1. May interact with enzymes involved in beta-oxidation of fatty acids, including ACOX1/AOX.

The protein localises to the peroxisome matrix. The enzyme catalyses Hydrolysis of proteins in presence of ATP.. Functionally, ATP-dependent serine protease that mediates the selective degradation of misfolded and unassembled polypeptides in the peroxisomal matrix. Necessary for type 2 peroxisome targeting signal (PTS2)-containing protein processing and facilitates peroxisome matrix protein import. May indirectly regulate peroxisomal fatty acid beta-oxidation through degradation of the self-processed forms of TYSND1. The protein is Lon protease homolog 2, peroxisomal (Lonp2) of Mus musculus (Mouse).